A 188-amino-acid chain; its full sequence is Sec-independent protein translocase protein TatB (188 aa).

A helical transmembrane segment spans residues 1 to 21 (MFDIGWSELVVIGVVALVAIG). A disordered region spans residues 147–188 (LPVPAETHALATTDLAPPDLAHPAPAHPEPTNSEPAKDAKAS). Low complexity predominate over residues 160–170 (DLAPPDLAHPA).

The protein belongs to the TatB family. The Tat system comprises two distinct complexes: a TatABC complex, containing multiple copies of TatA, TatB and TatC subunits, and a separate TatA complex, containing only TatA subunits. Substrates initially bind to the TatABC complex, which probably triggers association of the separate TatA complex to form the active translocon.

Its subcellular location is the cell inner membrane. Part of the twin-arginine translocation (Tat) system that transports large folded proteins containing a characteristic twin-arginine motif in their signal peptide across membranes. Together with TatC, TatB is part of a receptor directly interacting with Tat signal peptides. TatB may form an oligomeric binding site that transiently accommodates folded Tat precursor proteins before their translocation. This is Sec-independent protein translocase protein TatB from Rhodopseudomonas palustris (strain HaA2).